Consider the following 618-residue polypeptide: DELLA protein SLN1 (618 aa).

The tract at residues 1 to 36 (MKREYQDGGGSGGGGDEMGSSRDKMMVSSSEAGEGE) is disordered. Residues 7-17 (DGGGSGGGGDE) show a composition bias toward gly residues. The DELLA motif signature appears at 39-43 (DELLA). 2 disordered regions span residues 106 to 137 (LNAP…YFDL) and 159 to 197 (APAD…GAAR). Over residues 108 to 118 (APPPPLPPAPP) the composition is skewed to pro residues. 2 stretches are compositionally biased toward low complexity: residues 119–128 (QLNASTSSTV) and 176–197 (TGGS…GAAR). Residues 221–614 (VDTQEAGIRL…RPLIATSAWR (394 aa)) form the GRAS domain. A leucine repeat I (LRI) region spans residues 228–284 (IRLVHALLACAEAVQQENLSAAEALVKQIPLLAASQGGAMRKVAAYFGEALARRVFR). A LxCxE motif motif is present at residues 235 to 239 (LACAE). The tract at residues 303-368 (HAHFYESCPY…GGPPSFRLTG (66 aa)) is VHIID. The short motif at 334–338 (VHVVD) is the VHIID element. A leucine repeat II (LRII) region spans residues 382-421 (QVGWKLAQFAHTIRVDFQYRGLVAATLADLEPFMLQPEGE). The interval 431–535 (IAVNSVFEMH…EVYLGRQICN (105 aa)) is PFYRE. The SAW stretch occupies residues 538–614 (ACEGTERTER…RPLIATSAWR (77 aa)).

It belongs to the GRAS family. DELLA subfamily. In terms of processing, phosphorylated. Post-translationally, ubiquitinated. Upon GA application it is ubiquitinated, leading to its subsequent degradation. In terms of tissue distribution, apparently restricted to regions where growth is occurring in the leaf blade. Localizes almost exclusively to the basal elongation zone (EZ) for the elongating blades of L1, L2 and L3. More detailed fractionation of the L3 blade shows that in cv. Himalaya, it is preferentially localized to the basal third of the EZ, but its presence can still be detected toward the end of the EZ (at protein level).

The protein localises to the nucleus. Probable transcriptional regulator that acts as a repressor of the gibberellin (GA) signaling pathway. Probably acts by participating in large multiprotein complexes that repress transcription of GA-inducible genes. Upon GA application, it is degraded by the proteasome, allowing the GA signaling pathway. Acts as a negative regulator of GAMYB gene expression. The sequence is that of DELLA protein SLN1 (SLN1) from Hordeum vulgare (Barley).